A 114-amino-acid polypeptide reads, in one-letter code: Translation initiation factor 1A (114 aa).

Residues 19 to 91 (SEFRLPGEGE…EKGDIVHKYE (73 aa)) form the S1-like domain.

This sequence belongs to the eIF-1A family.

Functionally, seems to be required for maximal rate of protein biosynthesis. Enhances ribosome dissociation into subunits and stabilizes the binding of the initiator Met-tRNA(I) to 40 S ribosomal subunits. The protein is Translation initiation factor 1A (eIF1A) of Pyrobaculum aerophilum (strain ATCC 51768 / DSM 7523 / JCM 9630 / CIP 104966 / NBRC 100827 / IM2).